The sequence spans 142 residues: Baculoviral IAP repeat-containing protein 5 (142 aa).

The stretch at 18–88 (RIYTFKNWPF…KHSPGCAFLT (71 aa)) is one BIR repeat. At lysine 23 the chain carries N6-acetyllysine. Threonine 34 carries the phosphothreonine; by CDK1 and CDK15 modification. Residue threonine 48 is modified to Phosphothreonine. Residues cysteine 57, cysteine 60, histidine 77, and cysteine 84 each contribute to the Zn(2+) site. An N6-acetyllysine mark is found at lysine 90, lysine 110, lysine 112, and lysine 115. Residue threonine 117 is modified to Phosphothreonine; by AURKB.

This sequence belongs to the IAP family. In terms of assembly, monomer or homodimer. Exists as a homodimer in the apo state and as a monomer in the CPC-bound state. The monomer protects cells against apoptosis more efficiently than the dimer. Only the dimeric form is capable of enhancing tubulin stability in cells. When phosphorylated, interacts with LAMTOR5/HBXIP; the resulting complex binds pro-CASP9, as well as active CASP9, but much less efficiently. Component of the chromosomal passenger complex (CPC) composed of at least BIRC5/survivin, CDCA8/borealin, INCENP, AURKB or AURKC; in the complex forms a triple-helix bundle-based subcomplex with INCENP and CDCA8. Interacts with JTB. Interacts (via BIR domain) with histone H3 phosphorylated at 'Thr-3' (H3pT3). Interacts with EVI5. Interacts with GTP-bound RAN in both the S and M phases of the cell cycle. Interacts with USP9X. Interacts with tubulin. Interacts with BIRC2/c-IAP1. The monomeric form interacts with XIAP/BIRC4. Both the dimeric and monomeric form can interact with DIABLO/SMAC. Interacts with BIRC6/bruce. Interacts with FBXL7; this interaction facilitates the polyubiquitination and subsequent proteasomal degradation of BIRC5 by the SCF(FBXL7) E3 ubiquitin-protein ligase complex. Post-translationally, ubiquitinated by the Cul9-RING ubiquitin-protein ligase complex, leading to its degradation. Ubiquitination is required for centrosomal targeting. Deubiquitinated by USP35 or USP38; leading to stabilization. In terms of processing, in vitro phosphorylation at Thr-117 by AURKB prevents interaction with INCENP and localization to mitotic chromosomes. Phosphorylation at Thr-48 by CK2 is critical for its mitotic and anti-apoptotic activities. Phosphorylation at Thr-34 by CDK15 is critical for its anti-apoptotic activity.

The protein resides in the cytoplasm. It is found in the nucleus. The protein localises to the chromosome. Its subcellular location is the centromere. It localises to the cytoskeleton. The protein resides in the spindle. It is found in the kinetochore. The protein localises to the midbody. Its function is as follows. Multitasking protein that has dual roles in promoting cell proliferation and preventing apoptosis. Component of a chromosome passage protein complex (CPC) which is essential for chromosome alignment and segregation during mitosis and cytokinesis. Acts as an important regulator of the localization of this complex; directs CPC movement to different locations from the inner centromere during prometaphase to midbody during cytokinesis and participates in the organization of the center spindle by associating with polymerized microtubules. Involved in the recruitment of CPC to centromeres during early mitosis via association with histone H3 phosphorylated at 'Thr-3' (H3pT3) during mitosis. The complex with RAN plays a role in mitotic spindle formation by serving as a physical scaffold to help deliver the RAN effector molecule TPX2 to microtubules. May counteract a default induction of apoptosis in G2/M phase. The acetylated form represses STAT3 transactivation of target gene promoters. May play a role in neoplasia. Inhibitor of CASP3 and CASP7. Essential for the maintenance of mitochondrial integrity and function. In Rattus norvegicus (Rat), this protein is Baculoviral IAP repeat-containing protein 5 (Birc5).